The sequence spans 469 residues: MTAPRTLYDKIWDDHVVDVEPDGSALLYIDRHLVHEVTSPQAFEGLRVAGRTVRAPHKTLAVVDHNVQTSDRSKGIEDPESRTQLEALAENVRDFGIEFYDALDQRQGIVHIIGPEQGFTLPGQTIVCGDSHTSTHGAFGALAHGIGTSEVEHVLATQTLIQRKAKNMRVTVDGTLPRGVSAKDIVLAIIGEIGTAGGTGHVIEYAGEAIRALSMEGRMTICNMSIEGGARAGMVAPDETTYAYVNGRPKAPKGAAFDAARRYWESLATDEGAHFDREIRLDAANLPPLVSWGTSPEDIVSILGTVPDPAQIADENKRQSKEKALAYMGLTPGTRMTDVTLDRVFIGSCTNGRIEDLRIVAKMVEGRKVHDSVSAMVVPGSGLVKAQAEAEGIDRILKDAGFDWREPGCSMCLGMNPDKLRPGERCASTSNRNFEGRQGPRGRTHLVSPAMAAAAAVAGRFVDIREWRG.

Positions 349, 409, and 412 each coordinate [4Fe-4S] cluster.

This sequence belongs to the aconitase/IPM isomerase family. LeuC type 1 subfamily. Heterodimer of LeuC and LeuD. It depends on [4Fe-4S] cluster as a cofactor.

The catalysed reaction is (2R,3S)-3-isopropylmalate = (2S)-2-isopropylmalate. It participates in amino-acid biosynthesis; L-leucine biosynthesis; L-leucine from 3-methyl-2-oxobutanoate: step 2/4. Its function is as follows. Catalyzes the isomerization between 2-isopropylmalate and 3-isopropylmalate, via the formation of 2-isopropylmaleate. The protein is 3-isopropylmalate dehydratase large subunit of Methylorubrum extorquens (strain CM4 / NCIMB 13688) (Methylobacterium extorquens).